The primary structure comprises 861 residues: Leucine--tRNA ligase (861 aa).

A 'HIGH' region motif is present at residues 42–52 (PYPSGNLHMGH). Positions 620-624 (KMSKS) match the 'KMSKS' region motif. Residue Lys623 participates in ATP binding.

This sequence belongs to the class-I aminoacyl-tRNA synthetase family.

The protein resides in the cytoplasm. It catalyses the reaction tRNA(Leu) + L-leucine + ATP = L-leucyl-tRNA(Leu) + AMP + diphosphate. In Baumannia cicadellinicola subsp. Homalodisca coagulata, this protein is Leucine--tRNA ligase.